Consider the following 572-residue polypeptide: MALTISRAQYVATYGPTVGDKVRLGDTNLWATIEQDLLTKGDECKFGGGKSVRDGMAQSGTATRDNPNVLDFVITNVMIIDAKLGIIKADIGIRDGRIVGIGQAGNPDTMDNVTPNMIIGASTEVHNGAHLIATAGGIDTHIHFICPQQAQHAIESGVTTLIGGGTGPADGTHATTCTPGAWYMERMFQAAEALPVNVGFFGKGNCSTLDPLREQIEAGALGLKIHEDWGATPAVIDSALKVADEMDIQVAIHTDTLNESGFLEDTMKAIDGRVIHTFHTEGAGGGHAPDIIKAAMYSNVLPASTNPTRPFTKNTIDEHLDMLMVCHHLDKRVPEDVAFADSRIRPETIAAEDILHDMGVFSIMSSDSQAMGRIGEVVIRTWQTADKMKMQRGELGNEGNDNFRIKRYIAKYTINPAIAHGIAEHIGSLEVGKIADIVLWKPMFFGVKPEVVIKKGFISYAKMGDPNASIPTPQPVFYRPMYGAQGLATAQTAVFFVSQAAEKADIREKFGLHKETIAVKGCRNVGKKDLVHNDVTPNITVDAERYEVRVDGELITCEPVDSVPLGQRYFLF.

Residues 136–572 (GGIDTHIHFI…VPLGQRYFLF (437 aa)) enclose the Urease domain. Residues histidine 141, histidine 143, and lysine 224 each coordinate Ni(2+). Lysine 224 carries the post-translational modification N6-carboxylysine. Histidine 226 contacts substrate. Ni(2+)-binding residues include histidine 253 and histidine 279. Catalysis depends on histidine 327, which acts as the Proton donor. Residue aspartate 367 coordinates Ni(2+).

This sequence belongs to the metallo-dependent hydrolases superfamily. Urease alpha subunit family. Heterotrimer of UreA (gamma), UreB (beta) and UreC (alpha) subunits. Three heterotrimers associate to form the active enzyme. Ni cation is required as a cofactor. In terms of processing, carboxylation allows a single lysine to coordinate two nickel ions.

It is found in the cytoplasm. It carries out the reaction urea + 2 H2O + H(+) = hydrogencarbonate + 2 NH4(+). It functions in the pathway nitrogen metabolism; urea degradation; CO(2) and NH(3) from urea (urease route): step 1/1. The polypeptide is Urease subunit alpha (Haemophilus influenzae (strain 86-028NP)).